The primary structure comprises 218 residues: Glutathione S-transferase (218 aa).

The GST N-terminal domain maps to 3-88 (SKPVLGYWDI…YIGRKYKLTG (86 aa)). Glutathione-binding positions include 9 to 10 (YW), 43 to 46 (RSAW), Lys-50, 59 to 60 (NL), and 72 to 73 (QT). A GST C-terminal domain is found at 90-206 (NEPEELRVSL…YIKAQQPKLF (117 aa)). Position 116 (Tyr-116) interacts with substrate.

The protein belongs to the GST superfamily. Mu family.

It carries out the reaction RX + glutathione = an S-substituted glutathione + a halide anion + H(+). Conjugation of reduced glutathione to a wide number of exogenous and endogenous hydrophobic electrophiles. The sequence is that of Glutathione S-transferase from Tyrophagus putrescentiae (Mold mite).